The primary structure comprises 203 residues: MAEQTETSTAGYNYVSYGTEQHPIAGLSRVVRHITGHDSEGRSVFLSTDIGDHHRTLGEKQAISNIIYSTNQTPVELNGNHDIEFARNTEPGLHVKDGSVARLIDFAPGVESPLHRAVSLDYGVVIEGVFKMVLDSGEERIMRPGDISVQRATAHKWINVTGNGTLPGRMLFVLLDCNDVYVNGKKMEGYLGTLAKDYEGRSS.

Positions 105-171 are cupin-like domain; the sequence is DFAPGVESPL…GNGTLPGRML (67 aa).

Belongs to the virC family.

The protein operates within secondary metabolite biosynthesis. Functionally, cupin-domain-containing oxidoreductase; part of the gene cluster that mediates the biosynthesis of flavoglaucin and congeners (including aspergin, dihydroauroglaucin and auroglaucin), prenylated salicylaldehyde derivatives carrying a saturated or an unsaturated C-7 side chain. The PKS fogA releases the carboxylic acid (8E,10E,12E)-3,5,7-trihydroxytetradeca-8,10,12-trienoic acid as its product, as well as derivatives with one and two double bonds. FogA is indeed able to reduce the initial triketide, thus being at least partially responsible for the differently saturated heptyl side chains of flavoglaucin congeners. The oxidoreductases fogB, fogC and fogD modify the nascent polyketide in fogA-bound form and, together, fogA, fogB, fogC and fogD are necessary for the formation of the aromatic core and the cyclized PKS products are released as salicyl alcohols. In particular, fogB is responsible for oxidation of a hydroxyl group or reduction of remaining double bond(s) at the C-7 residue whereas fogD is probably involved in the reductive release of the modified PKS products. The cytochrome P450 monooxygenase fogE is then responsible for the hydroxylation at C-3 of the benzene ring. The fogE products are substrates of the prenyltransferase fogH and the prenylated benzyl alcohols are subsequently oxidized by the fogF to produce the final aryl aldehydes flavoglaucin and congeners. The short-chain dehydrogenase fogG does not seem to be involved in the biosynthesis of the prenylated salicylaldehyde derivatives. The chain is Cupin-domain-containing oxidoreductase fogC from Aspergillus ruber (strain CBS 135680).